A 178-amino-acid chain; its full sequence is MSRIGKKTIVIPAGVTVTLNGSTATVKGPKGELVKEFNPEITINIEGNEINVSRPTDNKNHRALHGTTRAILNNMVVGVSEGYEKKLELIGVGYRAQKQGDKLVLNVGYSHPVEFVAPKGVDIEVPANTQVIVKGYNKEHVGELAANIRAVRPPEPYKGKGIRYEGEHVRRKEGKTGK.

The tract at residues 159-178 (GKGIRYEGEHVRRKEGKTGK) is disordered.

This sequence belongs to the universal ribosomal protein uL6 family. Part of the 50S ribosomal subunit.

This protein binds to the 23S rRNA, and is important in its secondary structure. It is located near the subunit interface in the base of the L7/L12 stalk, and near the tRNA binding site of the peptidyltransferase center. This Listeria monocytogenes serotype 4b (strain CLIP80459) protein is Large ribosomal subunit protein uL6.